We begin with the raw amino-acid sequence, 334 residues long: UDP-N-acetylglucosamine--N-acetylmuramyl-(pentapeptide) pyrophosphoryl-undecaprenol N-acetylglucosamine transferase (334 aa).

Residues 11 to 13 (TGG), N125, S185, I229, and Q274 each bind UDP-N-acetyl-alpha-D-glucosamine.

It belongs to the glycosyltransferase 28 family. MurG subfamily.

It localises to the cell inner membrane. It carries out the reaction di-trans,octa-cis-undecaprenyl diphospho-N-acetyl-alpha-D-muramoyl-L-alanyl-D-glutamyl-meso-2,6-diaminopimeloyl-D-alanyl-D-alanine + UDP-N-acetyl-alpha-D-glucosamine = di-trans,octa-cis-undecaprenyl diphospho-[N-acetyl-alpha-D-glucosaminyl-(1-&gt;4)]-N-acetyl-alpha-D-muramoyl-L-alanyl-D-glutamyl-meso-2,6-diaminopimeloyl-D-alanyl-D-alanine + UDP + H(+). The protein operates within cell wall biogenesis; peptidoglycan biosynthesis. Functionally, cell wall formation. Catalyzes the transfer of a GlcNAc subunit on undecaprenyl-pyrophosphoryl-MurNAc-pentapeptide (lipid intermediate I) to form undecaprenyl-pyrophosphoryl-MurNAc-(pentapeptide)GlcNAc (lipid intermediate II). The chain is UDP-N-acetylglucosamine--N-acetylmuramyl-(pentapeptide) pyrophosphoryl-undecaprenol N-acetylglucosamine transferase from Thermosipho africanus (strain TCF52B).